The following is a 300-amino-acid chain: N-acetylmuramic acid 6-phosphate etherase (300 aa).

Positions 57–220 (ITHAFAHGGR…TSGAMIRSGK (164 aa)) constitute an SIS domain. Residue E85 is the Proton donor of the active site. The active site involves E116.

It belongs to the GCKR-like family. MurNAc-6-P etherase subfamily. In terms of assembly, homodimer.

It carries out the reaction N-acetyl-D-muramate 6-phosphate + H2O = N-acetyl-D-glucosamine 6-phosphate + (R)-lactate. It participates in amino-sugar metabolism; 1,6-anhydro-N-acetylmuramate degradation. Its pathway is amino-sugar metabolism; N-acetylmuramate degradation. The protein operates within cell wall biogenesis; peptidoglycan recycling. Functionally, specifically catalyzes the cleavage of the D-lactyl ether substituent of MurNAc 6-phosphate, producing GlcNAc 6-phosphate and D-lactate. Together with AnmK, is also required for the utilization of anhydro-N-acetylmuramic acid (anhMurNAc) either imported from the medium or derived from its own cell wall murein, and thus plays a role in cell wall recycling. This Vibrio vulnificus (strain CMCP6) protein is N-acetylmuramic acid 6-phosphate etherase.